Reading from the N-terminus, the 473-residue chain is Cysteine--tRNA ligase (473 aa).

Residue C29 coordinates Zn(2+). Residues 31–41 (PTVYDRAHLGN) carry the 'HIGH' region motif. Positions 225, 250, and 254 each coordinate Zn(2+). Positions 281-285 (KMSKS) match the 'KMSKS' region motif. K284 provides a ligand contact to ATP.

Belongs to the class-I aminoacyl-tRNA synthetase family. As to quaternary structure, monomer. Requires Zn(2+) as cofactor.

It localises to the cytoplasm. The catalysed reaction is tRNA(Cys) + L-cysteine + ATP = L-cysteinyl-tRNA(Cys) + AMP + diphosphate. This chain is Cysteine--tRNA ligase, found in Roseobacter denitrificans (strain ATCC 33942 / OCh 114) (Erythrobacter sp. (strain OCh 114)).